A 368-amino-acid chain; its full sequence is D-amino-acid oxidase (368 aa).

Residues Ala11, Ser14, Lys35, His36, Cys46, Ser47, Gly51, Asn53, and Phe174 each contribute to the FAD site. A disulfide bond links Cys230 and Cys285. Residues Tyr244, Tyr260, and Arg308 each contribute to the (R)-lactate site. Anthranilate is bound by residues Tyr244, Tyr260, and Arg308. FAD is bound by residues Arg308, Gly334, Gly337, Tyr338, and Gln339. A Microbody targeting signal motif is present at residues Ala366 to Leu368.

Belongs to the DAMOX/DASOX family. Homotetramer. It depends on FAD as a cofactor. Post-translationally, the disulfide bond might contribute to the high thermal stability of the protein.

The protein resides in the peroxisome matrix. The enzyme catalyses a D-alpha-amino acid + O2 + H2O = a 2-oxocarboxylate + H2O2 + NH4(+). It catalyses the reaction D-alanine + O2 + H2O = pyruvate + H2O2 + NH4(+). It carries out the reaction D-glutamate + O2 + H2O = H2O2 + 2-oxoglutarate + NH4(+). The catalysed reaction is D-serine + O2 + H2O = 3-hydroxypyruvate + H2O2 + NH4(+). The enzyme catalyses D-phenylalanine + O2 + H2O = 3-phenylpyruvate + H2O2 + NH4(+). It catalyses the reaction D-arginine + O2 + H2O = 5-guanidino-2-oxopentanoate + H2O2 + NH4(+). It carries out the reaction D-methionine + O2 + H2O = 4-methylsulfanyl-2-oxobutanoate + H2O2 + NH4(+). The catalysed reaction is D-leucine + O2 + H2O = 4-methyl-2-oxopentanoate + H2O2 + NH4(+). The enzyme catalyses D-lysine + O2 + H2O = 6-amino-2-oxohexanoate + H2O2 + NH4(+). It catalyses the reaction D-valine + O2 + H2O = 3-methyl-2-oxobutanoate + H2O2 + NH4(+). It carries out the reaction D-histidine + O2 + H2O = 3-(imidazol-5-yl)pyruvate + H2O2 + NH4(+). The catalysed reaction is D-glutamine + O2 + H2O = 2-oxoglutaramate + H2O2 + NH4(+). The enzyme catalyses D-isoleucine + O2 + H2O = (R)-3-methyl-2-oxopentanoate + H2O2 + NH4(+). It catalyses the reaction D-allo-isoleucine + O2 + H2O = (S)-3-methyl-2-oxopentanoate + H2O2 + NH4(+). It carries out the reaction D-threonine + O2 + H2O = (S)-3-hydroxy-2-oxobutanoate + H2O2 + NH4(+). The catalysed reaction is D-asparagine + O2 + H2O = 2-oxosuccinamate + H2O2 + NH4(+). The enzyme catalyses D-tryptophan + O2 + H2O = indole-3-pyruvate + H2O2 + NH4(+). It catalyses the reaction D-tyrosine + O2 + H2O = 3-(4-hydroxyphenyl)pyruvate + H2O2 + NH4(+). With respect to regulation, partially inhibited by benzoate, crotonate, and D-malate. Catalyzes the oxidative deamination of D-amino acids with broad substrate specificity. Enables the organism to utilize D-amino acids as a source of nutrients. Unusually, has high activity on D-glutamate. In Talaromyces emersonii (Thermophilic fungus), this protein is D-amino-acid oxidase.